A 146-amino-acid chain; its full sequence is Ribonuclease H (146 aa).

Positions 1–143 (MKKQVTIYTD…CDQLAREAIK (143 aa)) constitute an RNase H type-1 domain. Positions 10, 48, 70, and 135 each coordinate Mg(2+).

This sequence belongs to the RNase H family. Monomer. Mg(2+) serves as cofactor.

It localises to the cytoplasm. The enzyme catalyses Endonucleolytic cleavage to 5'-phosphomonoester.. In terms of biological role, endonuclease that specifically degrades the RNA of RNA-DNA hybrids. The chain is Ribonuclease H from Chlorobium chlorochromatii (strain CaD3).